The following is a 448-amino-acid chain: Chromosomal replication initiator protein DnaA (448 aa).

The tract at residues 1 to 93 is domain I, interacts with DnaA modulators; it reads MEQIVSSLWS…KPTEQNLSAS (93 aa). Residues 94 to 110 are domain II; it reads STNKEELTQDTVHKFKT. The interval 111-328 is domain III, AAA+ region; it reads GLNGRLTFDN…GAINRVSAWC (218 aa). Positions 156, 158, 159, and 160 each coordinate ATP. The domain IV, binds dsDNA stretch occupies residues 329-448; it reads NFTKRQITID…YTNLTRKLSS (120 aa).

The protein belongs to the DnaA family. In terms of assembly, oligomerizes as a right-handed, spiral filament on DNA at oriC.

The protein resides in the cytoplasm. Functionally, plays an essential role in the initiation and regulation of chromosomal replication. ATP-DnaA binds to the origin of replication (oriC) to initiate formation of the DNA replication initiation complex once per cell cycle. Binds the DnaA box (a 9 base pair repeat at the origin) and separates the double-stranded (ds)DNA. Forms a right-handed helical filament on oriC DNA; dsDNA binds to the exterior of the filament while single-stranded (ss)DNA is stabiized in the filament's interior. The ATP-DnaA-oriC complex binds and stabilizes one strand of the AT-rich DNA unwinding element (DUE), permitting loading of DNA polymerase. After initiation quickly degrades to an ADP-DnaA complex that is not apt for DNA replication. Binds acidic phospholipids. The chain is Chromosomal replication initiator protein DnaA from Haemophilus ducreyi (strain 35000HP / ATCC 700724).